The sequence spans 335 residues: UPF0324 membrane protein LMOf2365_2179 (335 aa).

A run of 8 helical transmembrane segments spans residues 10–28 (TFWY…SYFL), 33–55 (FLMI…ALFP), 91–113 (AGWR…VYFL), 123–142 (LAIL…VVAI), 155–177 (VAAT…IYPI), 251–270 (VPWF…FGII), 277–299 (FLVI…NVHL), and 309–331 (PFAA…VLLF).

It belongs to the UPF0324 family.

The protein resides in the cell membrane. This chain is UPF0324 membrane protein LMOf2365_2179, found in Listeria monocytogenes serotype 4b (strain F2365).